The sequence spans 353 residues: O-antigen biosynthesis glycosyltransferase WclY (353 aa).

A helical transmembrane segment spans residues 116 to 136; that stretch reads SLIWGLLWCSIWLFFDKLVIL. 2 residues coordinate UDP: Asn190 and Glu271. The short motif at 263–271 is the E(x7)E glycosyltransferase motif element; that stretch reads EGFGLTVLE.

The protein belongs to the glycosyltransferase group 1 family. Glycosyltransferase 4 subfamily.

It is found in the membrane. It functions in the pathway bacterial outer membrane biogenesis; LPS O-antigen biosynthesis. Functionally, involved in the assembly of the O-repeating unit during O-antigen biosynthesis. N-acetylglucosamine transferase accountable for the alpha-D-GlcNAc-1,4-beta-D-Gal linkage within the O-antigen. This is O-antigen biosynthesis glycosyltransferase WclY from Escherichia coli.